The following is a 544-amino-acid chain: NADP-dependent malic enzyme (544 aa).

A disordered region spans residues 1–22 (MQNKPSFILRNPSANKGTGFNN). Over residues 12–21 (PSANKGTGFN) the composition is skewed to polar residues. Y92 functions as the Proton donor in the catalytic mechanism. R145 serves as a coordination point for NAD(+). The active-site Proton acceptor is the K163. A divalent metal cation contacts are provided by E234, D235, and D258. D258 contributes to the NAD(+) binding site. 287 to 303 (VFLGAGSAGIGVADCIM) contributes to the NADP(+) binding site. An NAD(+)-binding site is contributed by N400.

The protein belongs to the malic enzymes family. In terms of assembly, homotetramer. It depends on Mg(2+) as a cofactor. The cofactor is Mn(2+). In terms of tissue distribution, expressed in the fruiting body.

It is found in the cytoplasm. It carries out the reaction (S)-malate + NADP(+) = pyruvate + CO2 + NADPH. It catalyses the reaction oxaloacetate + H(+) = pyruvate + CO2. The polypeptide is NADP-dependent malic enzyme (malA) (Dictyostelium discoideum (Social amoeba)).